The following is a 78-amino-acid chain: Putative membrane protein insertion efficiency factor (78 aa).

It belongs to the UPF0161 family.

The protein resides in the cell membrane. Its function is as follows. Could be involved in insertion of integral membrane proteins into the membrane. This Bacillus cereus (strain G9842) protein is Putative membrane protein insertion efficiency factor.